We begin with the raw amino-acid sequence, 694 residues long: Phosphatase and actin regulator 4 (694 aa).

Disordered regions lie at residues 1-354 (MEDP…SPLV) and 375-405 (QDISQQEDQKTEVPKKIQDQSFGESHIPSRL). Residues 45–54 (KPWKWRKKKS) are compositionally biased toward basic residues. Over residues 55–84 (SDKFKETSEVLERKISMRKPREELVKRGVL) the composition is skewed to basic and acidic residues. Residues 63–88 (EVLERKISMRKPREELVKRGVLLEDP) form an RPEL 1 repeat. 4 positions are modified to phosphoserine: Ser-116, Ser-118, Ser-129, and Ser-145. 2 stretches are compositionally biased toward low complexity: residues 184 to 209 (AGSTARSVSSTSGSTTVTSAATTAAT) and 231 to 249 (TLPAAPASANTAATTTAPA). Over residues 250–259 (KQPPIPPPKP) the composition is skewed to pro residues. 4 positions are modified to phosphoserine: Ser-264, Ser-285, Ser-335, and Ser-337. Pro residues predominate over residues 329 to 352 (LIIPPSSPSPPLPTHIPPEPPRSP). Positions 381–392 (EDQKTEVPKKIQ) are enriched in basic and acidic residues. A Phosphoserine modification is found at Ser-420. Thr-425 is modified (phosphothreonine). Ser-436, Ser-446, Ser-457, Ser-503, Ser-505, Ser-549, and Ser-582 each carry phosphoserine. A disordered region spans residues 467–562 (VPDDEEEEQT…TNLNSWPRKS (96 aa)). Over residues 546–559 (SRPSEPETNLNSWP) the composition is skewed to polar residues. RPEL repeat units lie at residues 575–600 (NTLIRRLSQRPTAEELEQRNILQPKN) and 613–638 (RRLTRKLSQRPTVAELLARKILRFNE). The segment at 589-608 (ELEQRNILQPKNEADRQAEK) is disordered. At Ser-620 the chain carries Phosphoserine.

Belongs to the phosphatase and actin regulator family. In terms of assembly, binds PPP1CA and actin.

It is found in the cytoplasm. It localises to the cell projection. The protein resides in the lamellipodium. Functionally, regulator of protein phosphatase 1 (PP1) required for neural tube and optic fissure closure, and enteric neural crest cell (ENCCs) migration during development. Acts as an activator of PP1 by interacting with PPP1CA and preventing phosphorylation of PPP1CA at 'Thr-320'. During neural tube closure, localizes to the ventral neural tube and activates PP1, leading to down-regulate cell proliferation within cranial neural tissue and the neural retina. Also acts as a regulator of migration of enteric neural crest cells (ENCCs) by activating PP1, leading to dephosphorylation and subsequent activation of cofilin (COF1 or COF2) and repression of the integrin signaling through the RHO/ROCK pathway. This is Phosphatase and actin regulator 4 (Phactr4) from Mus musculus (Mouse).